The primary structure comprises 147 residues: Hemoglobin subunit epsilon (147 aa).

Residues 3–147 enclose the Globin domain; it reads HFTAEEKSTI…VATALAHKYH (145 aa). Phosphoserine occurs at positions 14 and 51. His-64 and His-93 together coordinate heme b.

This sequence belongs to the globin family. In terms of assembly, heterotetramer of two alpha chains and two epsilon chains in early embryonic hemoglobin Gower-2; two zeta chains and two epsilon chains in early embryonic hemoglobin Gower-1. As to expression, red blood cells.

In terms of biological role, the epsilon chain is a beta-type chain of early mammalian embryonic hemoglobin. The chain is Hemoglobin subunit epsilon (HBE1) from Eulemur fulvus fulvus (Brown lemur).